The chain runs to 160 residues: Transcription elongation factor GreA (160 aa).

The stretch at Leu-43–Ile-75 forms a coiled coil.

This sequence belongs to the GreA/GreB family.

Its function is as follows. Necessary for efficient RNA polymerase transcription elongation past template-encoded arresting sites. The arresting sites in DNA have the property of trapping a certain fraction of elongating RNA polymerases that pass through, resulting in locked ternary complexes. Cleavage of the nascent transcript by cleavage factors such as GreA or GreB allows the resumption of elongation from the new 3'terminus. GreA releases sequences of 2 to 3 nucleotides. In Prosthecochloris aestuarii (strain DSM 271 / SK 413), this protein is Transcription elongation factor GreA.